The chain runs to 483 residues: Probable cytosol aminopeptidase (483 aa).

2 residues coordinate Mn(2+): Lys-244 and Asp-249. Lys-256 is an active-site residue. Positions 267, 326, and 328 each coordinate Mn(2+). Arg-330 is an active-site residue.

The protein belongs to the peptidase M17 family. Requires Mn(2+) as cofactor.

Its subcellular location is the cytoplasm. It carries out the reaction Release of an N-terminal amino acid, Xaa-|-Yaa-, in which Xaa is preferably Leu, but may be other amino acids including Pro although not Arg or Lys, and Yaa may be Pro. Amino acid amides and methyl esters are also readily hydrolyzed, but rates on arylamides are exceedingly low.. The catalysed reaction is Release of an N-terminal amino acid, preferentially leucine, but not glutamic or aspartic acids.. Presumably involved in the processing and regular turnover of intracellular proteins. Catalyzes the removal of unsubstituted N-terminal amino acids from various peptides. The chain is Probable cytosol aminopeptidase from Campylobacter jejuni subsp. jejuni serotype O:2 (strain ATCC 700819 / NCTC 11168).